We begin with the raw amino-acid sequence, 876 residues long: Liprin-beta-2 (876 aa).

Residues 101–313 adopt a coiled-coil conformation; that stretch reads AASNETYQER…TGLLNQYRKV (213 aa). 3 positions are modified to phosphoserine: S329, S363, and S387. The interval 356–376 is disordered; it reads EMPPRCSSPTVGPPPLPQKSL. Disordered stretches follow at residues 425 to 451 and 470 to 500; these read LPGKLSGATPNGEAAKSPPTICQPDAT and VVNDLSSTSSGTESGPQSPLTPDGKRNPKGI. Residues 473 to 489 show a composition bias toward polar residues; sequence DLSSTSSGTESGPQSPL. S512 is modified (phosphoserine). The disordered stretch occupies residues 527 to 553; that stretch reads RGGLRATAGPRLSRTRDSKGQKSDANA. 3 SAM domains span residues 558-622, 630-693, and 718-783; these read WSTE…INTK, LDHI…LHVN, and WSNH…KFNA.

It belongs to the liprin family. Liprin-beta subfamily. In terms of assembly, forms homodimers and heterodimers. In terms of tissue distribution, widely expressed.

In terms of biological role, may regulate the disassembly of focal adhesions. Did not bind receptor-like tyrosine phosphatases type 2A. This is Liprin-beta-2 (PPFIBP2) from Homo sapiens (Human).